Here is a 487-residue protein sequence, read N- to C-terminus: Serralysin (487 aa).

A propeptide spanning residues 1–16 is cleaved from the precursor; sequence MQSTKKAIEITESSLA. H192 contacts Zn(2+). E193 is a catalytic residue. Zn(2+)-binding residues include H196, H202, and Y232. Residues R269, G271, T273, D301, G303, G304, D306, T343, E345, G350, G352, D354, N359, A361, N363, G367, G368, A369, G370, D372, G376, G377, G378, G379, D381, G385, G386, A387, G388, D390, D399, D406, and D416 each coordinate Ca(2+). 2 Hemolysin-type calcium-binding repeats span residues 348 to 365 and 366 to 383; these read IGGS…NNVL and KGGA…ADEL.

This sequence belongs to the peptidase M10B family. Ca(2+) is required as a cofactor. The cofactor is Zn(2+).

It localises to the secreted. The catalysed reaction is Preferential cleavage of bonds with hydrophobic residues in P1'.. Has insecticidal activity against the locust M.palpalis. When administered orally to locusts at a low dose it causes them to lie on their sides exhibiting sporadic limb movements and muscular twitching, followed by full recovery. When administered at higher doses the same symptoms are observed, followed by death. The protein is Serralysin of Serratia marcescens.